A 1550-amino-acid chain; its full sequence is DNA excision repair protein ERCC-6-like 2 (1550 aa).

Positions 1–23 (MDPSAPQPRAETSGKDIWHPGER) are disordered. Over residues 12-22 (TSGKDIWHPGE) the composition is skewed to basic and acidic residues. Positions 135–321 (YGHYIHGGGC…WCVMDWAVPG (187 aa)) constitute a Helicase ATP-binding domain. 148 to 155 (DDMGLGKT) lines the ATP pocket. The short motif at 272–275 (DEAH) is the DEAH box element. A Helicase C-terminal domain is found at 512–662 (VLQQLLNHCR…CVVVGSENAK (151 aa)). Positions 785 to 796 (PGQLTLLQCGFS) match the Atypical PIP-box motif. Disordered stretches follow at residues 808 to 848 (DSDG…TSKH), 914 to 1002 (FPDN…SSLR), and 1354 to 1410 (AETK…TRTG). Basic and acidic residues-rich tracts occupy residues 830 to 840 (EAKDAGCEKNQ) and 933 to 953 (TEHTVKTRNNDNSRNTDDKRN). 2 positions are modified to phosphoserine: S980 and S983. Basic residues predominate over residues 992–1002 (SRVRKRASSLR). Polar residues predominate over residues 1359 to 1388 (SPVSSTQEIDSGKNSQASEDTVTSRSLNSE). S1373 and S1376 each carry phosphoserine. Residues 1389–1405 (SETRERRLENTMKDQQD) are compositionally biased toward basic and acidic residues.

This sequence belongs to the SNF2/RAD54 helicase family. Interacts with NEK6. Interacts (via an atypical PIP-box) with PCNA; this interaction facilitates cenrtomeric localization of ERCC6L2. Interacts with CYREN; this interaction is DNA independent. Interacts with XRCC6 and XRCC5. In terms of processing, phosphorylated by NEK6. Expressed in bone marrow (at protein level).

The protein localises to the nucleus. Its subcellular location is the cytoplasm. It localises to the cytoskeleton. The protein resides in the microtubule organizing center. It is found in the centrosome. The protein localises to the mitochondrion. Its subcellular location is the chromosome. It localises to the centromere. In terms of biological role, promotes double-strand break (DSB) end-joining and facilitates programmed recombination by controlling how DNA ends are joined in a spatially oriented manner during repair. Also plays a role in DNA repair by restricting DNA end resection in double strand break (DSB) repair. Facilitates replication of complex DNA regions and regulates the maintenance of chromatin structure. This chain is DNA excision repair protein ERCC-6-like 2, found in Homo sapiens (Human).